The chain runs to 238 residues: 14-3-3 family protein artA (238 aa).

Belongs to the 14-3-3 family.

Its function is as follows. 14-3-3 family protein that plays a role in the morphological differentiation and secondary metabolism biosynthesis. Required for normal fungal morphogenesis in an environment-dependent manner, affecting the balance between production of conidiophores and the formation of sclerotia, resistant structures that are necessary for the dissemination and survival. Acts as a positive regulator of conidiation and a negative regulator of sclerotial production. Also regulates the production of secondary metabolites such as aflatoxin, but also the indole-tetramic acid mycotoxin cyclopiazonic acid (CPA) and ustiloxin, an inhibitor of microtubule assembly. In Aspergillus flavus (strain ATCC 200026 / FGSC A1120 / IAM 13836 / NRRL 3357 / JCM 12722 / SRRC 167), this protein is 14-3-3 family protein artA.